Here is a 270-residue protein sequence, read N- to C-terminus: Regulator of G-protein signaling rgs-10 (270 aa).

Residues 135–252 (SPETLAASEY…LEDPLYLDLV (118 aa)) enclose the RGS domain.

Shown to have a role in viability and embryogenesis. The chain is Regulator of G-protein signaling rgs-10 (rgs-10) from Caenorhabditis elegans.